A 306-amino-acid polypeptide reads, in one-letter code: Acetaldehyde dehydrogenase (306 aa).

12–15 (SGNI) contacts NAD(+). The active-site Acyl-thioester intermediate is C127. NAD(+) contacts are provided by residues 158–166 (SAGPGTRAN) and N277.

The protein belongs to the acetaldehyde dehydrogenase family.

It catalyses the reaction acetaldehyde + NAD(+) + CoA = acetyl-CoA + NADH + H(+). The protein is Acetaldehyde dehydrogenase of Mycolicibacterium gilvum (strain PYR-GCK) (Mycobacterium gilvum (strain PYR-GCK)).